The primary structure comprises 370 residues: MALETMTLSLSSSAMLSSGVVEDDKKQEAIVFPKFVLMGHRGFGMNMLQSPDEKMKFIKENSLLSFNVAADFPIDFIEFDVQVTRDGCPVIFHDIFMFTQEQGVIIEKRVTEMDLHEFLSYGPQRDGTNVKPMWRKTKDGRIFEWKVEKDDPLCTLEDAFLNVKHSLGFNIELKFDDNTVYGEGELRQTLDNILTVVNEHSKNRPIIFSSFHPDAARLIRNMQRCYPVFFLTNGGCEIYKDVRRNSLDEAIKLCKESGLQGLVSEVKAILRTPNAITRVKDSKLSLLSYGQLNNVVEVIYLQYLMGVEGVIVDMVKDISEAIANIEVTNEDDCEGEDERKCLIRFGEERKKVEITKDMITLLNKFVPKLL.

A GP-PDE domain is found at 35 to 322 (FVLMGHRGFG…DMVKDISEAI (288 aa)).

Belongs to the glycerophosphoryl diester phosphodiesterase family. In terms of tissue distribution, expressed in flowers and siliques.

The enzyme catalyses a sn-glycero-3-phosphodiester + H2O = an alcohol + sn-glycerol 3-phosphate + H(+). The sequence is that of Glycerophosphodiester phosphodiesterase GDPD3 from Arabidopsis thaliana (Mouse-ear cress).